The following is a 78-amino-acid chain: Acyl carrier protein (78 aa).

Positions 2 to 77 constitute a Carrier domain; sequence SDTVERVKKI…DAVKFIDKAS (76 aa). Ser37 is subject to O-(pantetheine 4'-phosphoryl)serine.

The protein belongs to the acyl carrier protein (ACP) family. In terms of processing, 4'-phosphopantetheine is transferred from CoA to a specific serine of apo-ACP by AcpS. This modification is essential for activity because fatty acids are bound in thioester linkage to the sulfhydryl of the prosthetic group.

It is found in the cytoplasm. Its pathway is lipid metabolism; fatty acid biosynthesis. Functionally, carrier of the growing fatty acid chain in fatty acid biosynthesis. This chain is Acyl carrier protein, found in Bartonella quintana (strain Toulouse) (Rochalimaea quintana).